We begin with the raw amino-acid sequence, 175 residues long: Cytochrome c homolog (175 aa).

At 1–8 (MTGKELNK) the chain is on the cytoplasmic side. Residues 9–29 (IVAAILFASLIAMIVGFIANI) traverse the membrane as a helical; Signal-anchor segment. At 30–175 (LYKPNLHVLH…LFLKNYVHDQ (146 aa)) the chain is on the periplasmic side. 4 residues coordinate heme c: C84, C87, H88, and M150.

It belongs to the cytochrome c family. Binds 1 heme c group covalently per subunit.

It is found in the cell membrane. Functionally, may be involved in electron transfer from bc1 complex to aa3. This is Cytochrome c homolog (cycM) from Rickettsia prowazekii (strain Madrid E).